We begin with the raw amino-acid sequence, 490 residues long: JNK-interacting protein 1 (490 aa).

Disordered regions lie at residues 1-71 (MADS…DHEP) and 213-254 (EDSS…PVSQ). Residues 231 to 249 (GHSTAHSPNDFKSMSPQIT) show a composition bias toward polar residues. The SH3 domain occupies 271-332 (MLEATHRGLH…PSAYAVDLDY (62 aa)). Residues 344 to 479 (KERYLLGYLG…FQRFYQKFIE (136 aa)) enclose the PID domain.

This sequence belongs to the JIP scaffold family. As to quaternary structure, forms homo- and heterooligomeric complexes. Binds Hep, a dual specificity protein kinase in the JNK pathway, but not its downstream target bsk. The C-terminal region interacts with the kinesin light chain protein, Klc, and the C-terminal PTY motif of amyloid-beta protein precursor-like protein, Appl. In terms of tissue distribution, expressed in the brain, CNS, PNS and cells posterior to the morphogenetic furrow in the eye imaginal disk of late embryos.

It localises to the cytoplasm. The JNK-interacting protein (JIP) group of scaffold proteins selectively mediates JNK signaling by aggregating specific components of the MAPK cascade to form a functional JNK signaling module. May function as a regulator of vesicle transport, through interactions with the JNK-signaling components and motor proteins. This chain is JNK-interacting protein 1 (Aplip1), found in Drosophila melanogaster (Fruit fly).